The chain runs to 343 residues: L-threonine 3-dehydrogenase (343 aa).

Position 39 (Cys-39) interacts with Zn(2+). Residues Thr-41 and His-44 each act as charge relay system in the active site. 6 residues coordinate Zn(2+): His-64, Glu-65, Cys-94, Cys-97, Cys-100, and Cys-108. NAD(+)-binding positions include Ile-176, Asp-196, Arg-201, 263-265, and 287-288; these read LGI and IY.

This sequence belongs to the zinc-containing alcohol dehydrogenase family. Homotetramer. Zn(2+) serves as cofactor.

It localises to the cytoplasm. It carries out the reaction L-threonine + NAD(+) = (2S)-2-amino-3-oxobutanoate + NADH + H(+). Its pathway is amino-acid degradation; L-threonine degradation via oxydo-reductase pathway; glycine from L-threonine: step 1/2. Functionally, catalyzes the NAD(+)-dependent oxidation of L-threonine to 2-amino-3-ketobutyrate. In Anaeromyxobacter sp. (strain Fw109-5), this protein is L-threonine 3-dehydrogenase.